The primary structure comprises 511 residues: Alpha-amylase 1 (511 aa).

A signal peptide spans 1 to 15 (MKFFLLLSLIGFCWA). Gln16 bears the Pyrrolidone carboxylic acid mark. 3 disulfide bridges follow: Cys43–Cys101, Cys85–Cys130, and Cys156–Cys175. Residues Asn115, Arg173, and Asp182 each contribute to the Ca(2+) site. Arg210 contacts chloride. Asp212 (nucleophile) is an active-site residue. His216 contributes to the Ca(2+) binding site. Glu248 acts as the Proton donor in catalysis. Chloride is bound by residues Asn313 and Arg352. Intrachain disulfides connect Cys393-Cys399 and Cys465-Cys477.

Belongs to the glycosyl hydrolase 13 family. In terms of assembly, monomer. The cofactor is Ca(2+). Chloride is required as a cofactor. Expressed in liver and saliva.

The protein localises to the secreted. The catalysed reaction is Endohydrolysis of (1-&gt;4)-alpha-D-glucosidic linkages in polysaccharides containing three or more (1-&gt;4)-alpha-linked D-glucose units.. This Mus musculus (Mouse) protein is Alpha-amylase 1 (Amy1).